We begin with the raw amino-acid sequence, 244 residues long: rRNA adenine N-6-methyltransferase (244 aa).

Positions 11, 13, 38, 59, 84, and 101 each coordinate S-adenosyl-L-methionine.

Belongs to the class I-like SAM-binding methyltransferase superfamily. rRNA adenine N(6)-methyltransferase family.

Functionally, involved in erythromycin resistance. The protein is rRNA adenine N-6-methyltransferase (ermG) of Lysinibacillus sphaericus (Bacillus sphaericus).